The chain runs to 359 residues: Peptide chain release factor 1 (359 aa).

Q235 is modified (N5-methylglutamine).

It belongs to the prokaryotic/mitochondrial release factor family. Post-translationally, methylated by PrmC. Methylation increases the termination efficiency of RF1.

It localises to the cytoplasm. Peptide chain release factor 1 directs the termination of translation in response to the peptide chain termination codons UAG and UAA. This chain is Peptide chain release factor 1, found in Methylibium petroleiphilum (strain ATCC BAA-1232 / LMG 22953 / PM1).